Reading from the N-terminus, the 1134-residue chain is ATP-dependent helicase/deoxyribonuclease subunit B (1134 aa).

8–15 (GRAGSGKS) contacts ATP. [4Fe-4S] cluster-binding residues include C771, C1089, C1092, and C1098.

The protein belongs to the helicase family. AddB/RexB type 1 subfamily. As to quaternary structure, heterodimer of AddA and AddB. Mg(2+) is required as a cofactor. It depends on [4Fe-4S] cluster as a cofactor.

In terms of biological role, the heterodimer acts as both an ATP-dependent DNA helicase and an ATP-dependent, dual-direction single-stranded exonuclease. Recognizes the chi site generating a DNA molecule suitable for the initiation of homologous recombination. The AddB subunit has 5' -&gt; 3' nuclease activity but not helicase activity. This is ATP-dependent helicase/deoxyribonuclease subunit B from Clostridium novyi (strain NT).